Consider the following 128-residue polypeptide: Large ribosomal subunit protein bL17 (128 aa).

This sequence belongs to the bacterial ribosomal protein bL17 family. Part of the 50S ribosomal subunit. Contacts protein L32.

This chain is Large ribosomal subunit protein bL17, found in Streptococcus equi subsp. zooepidemicus (strain H70).